Reading from the N-terminus, the 615-residue chain is 3-(3-hydroxy-phenyl)propionate/3-hydroxycinnamic acid hydroxylase 1 (615 aa).

Positions 1-20 (MRPAFEPAAGLGRAHPHETT) are disordered. Residues 27-56 (DVAI…VVEK) and 294-304 (FRVKRILLAGD) contribute to the FAD site.

Belongs to the PheA/TfdB FAD monooxygenase family. Requires FAD as cofactor.

The catalysed reaction is 3-(3-hydroxyphenyl)propanoate + NADH + O2 + H(+) = 3-(2,3-dihydroxyphenyl)propanoate + NAD(+) + H2O. The enzyme catalyses (2E)-3-(3-hydroxyphenyl)prop-2-enoate + NADH + O2 + H(+) = (2E)-3-(2,3-dihydroxyphenyl)prop-2-enoate + NAD(+) + H2O. Its pathway is aromatic compound metabolism; 3-phenylpropanoate degradation. Catalyzes the insertion of one atom of molecular oxygen into position 2 of the phenyl ring of 3-(3-hydroxyphenyl)propionate (3-HPP) and hydroxycinnamic acid (3HCI). The chain is 3-(3-hydroxy-phenyl)propionate/3-hydroxycinnamic acid hydroxylase 1 from Burkholderia vietnamiensis (strain G4 / LMG 22486) (Burkholderia cepacia (strain R1808)).